A 262-amino-acid chain; its full sequence is tRNA pseudouridine synthase A (262 aa).

The active-site Nucleophile is the D51. A substrate-binding site is contributed by Y109.

This sequence belongs to the tRNA pseudouridine synthase TruA family. In terms of assembly, homodimer.

It carries out the reaction uridine(38/39/40) in tRNA = pseudouridine(38/39/40) in tRNA. Its function is as follows. Formation of pseudouridine at positions 38, 39 and 40 in the anticodon stem and loop of transfer RNAs. In Aliivibrio fischeri (strain ATCC 700601 / ES114) (Vibrio fischeri), this protein is tRNA pseudouridine synthase A.